The sequence spans 384 residues: Mannitol-1-phosphate 5-dehydrogenase (384 aa).

3–14 serves as a coordination point for NAD(+); that stretch reads ALHFGAGNIGRG.

Belongs to the mannitol dehydrogenase family.

It catalyses the reaction D-mannitol 1-phosphate + NAD(+) = beta-D-fructose 6-phosphate + NADH + H(+). This chain is Mannitol-1-phosphate 5-dehydrogenase (mtlD), found in Clostridium acetobutylicum (strain ATCC 824 / DSM 792 / JCM 1419 / IAM 19013 / LMG 5710 / NBRC 13948 / NRRL B-527 / VKM B-1787 / 2291 / W).